The chain runs to 287 residues: ATP synthase gamma chain (287 aa).

The protein belongs to the ATPase gamma chain family. F-type ATPases have 2 components, CF(1) - the catalytic core - and CF(0) - the membrane proton channel. CF(1) has five subunits: alpha(3), beta(3), gamma(1), delta(1), epsilon(1). CF(0) has three main subunits: a, b and c.

It localises to the cell inner membrane. In terms of biological role, produces ATP from ADP in the presence of a proton gradient across the membrane. The gamma chain is believed to be important in regulating ATPase activity and the flow of protons through the CF(0) complex. This is ATP synthase gamma chain from Marinobacter nauticus (strain ATCC 700491 / DSM 11845 / VT8) (Marinobacter aquaeolei).